Here is a 92-residue protein sequence, read N- to C-terminus: Small ribosomal subunit protein uS19c (92 aa).

This sequence belongs to the universal ribosomal protein uS19 family.

Its subcellular location is the plastid. The protein resides in the chloroplast. Functionally, protein S19 forms a complex with S13 that binds strongly to the 16S ribosomal RNA. This is Small ribosomal subunit protein uS19c from Chaetosphaeridium globosum (Charophycean green alga).